A 2440-amino-acid chain; its full sequence is Nuclear receptor corepressor 1 (2440 aa).

The segment covering 1-18 has biased composition (polar residues); sequence MSSSGYPPNQGAFSTEQS. Disordered stretches follow at residues 1 to 177 and 206 to 231; these read MSSS…SKLS and QQQL…VEQK. The interval 1-373 is interaction with ZBTB33 and HEXIM1; sequence MSSSGYPPNQ…QRGAGLSATI (373 aa). The span at 51 to 64 shows a compositional bias: low complexity; the sequence is SQASQLLQQQQQQQ. Composition is skewed to basic and acidic residues over residues 77–88, 99–119, and 141–155; these read PGSDRPQERRTS, VDHD…DSHF, and ADAK…KHEA. Position 172 is a phosphoserine (Ser172). Positions 174–216 form a coiled coil; it reads SKLSKEELIQSMDRVDREIAKVEQQILKLKKKQQQLEEEAAKP. A compositionally biased stretch (basic and acidic residues) spans 212–221; that stretch reads EAAKPPEPEK. A Phosphoserine modification is found at Ser224. An interaction with SIN3A/B region spans residues 254–312; the sequence is FEGLGPKVELPLYNQPSDTKVYHENIKTNQVMRKKLILFFKRRNHARKQREQKICQRYD. Positions 299-328 form a coiled coil; sequence ARKQREQKICQRYDQLMEAWEKKVDRIENN. Residues 435 to 486 form the SANT 1 domain; the sequence is QFMNVWTDHEKEIFKDKFIQHPKNFGLIASYLERKSVPDCVLYYYLTKKNEN. Disordered regions lie at residues 497 to 632 and 677 to 915; these read KRRG…TEEE and NLLQ…GSIL. Residues 501–557 adopt a coiled-coil conformation; that stretch reads RNQQIARPSQEEKVEEKEEDKAEKTEKKEEEKKDEEEKDEKEDSKENTKEKDKIDGT. 2 stretches are compositionally biased toward basic and acidic residues: residues 509-531 and 541-556; these read SQEE…KEEE and KEDS…KIDG. Positions 592-605 are enriched in low complexity; that stretch reads EAAAASAAAAAATE. Pro residues predominate over residues 606-617; sequence EPPPPLPPPPEP. The 52-residue stretch at 623–674 folds into the SANT 2 domain; that stretch reads VETSRWTEEEMEVAKKGLVEHGRNWAAIAKMVGTKSEAQCKNFYFNYKRRHN. The span at 698-708 shows a compositional bias: polar residues; that stretch reads QCESVASTVSA. Acidic residues predominate over residues 709-728; the sequence is QEDEDIEASNEEENPEDSEV. Residues 752–768 are compositionally biased toward low complexity; sequence ELEPTTETAPSTSPSLA. The span at 781-792 shows a compositional bias: polar residues; that stretch reads ETQVNDSISAET. The segment covering 820–859 has biased composition (basic and acidic residues); it reads DSVDVEVRVPENHASKVEGDNTKERDLDRASEKVEPRDED. Composition is skewed to polar residues over residues 864-883 and 906-915; these read QQIN…SATC and SLLNPTGSIL. Positions 988–1816 are interaction with ETO; sequence RSSTSPCGTS…QGLPASRYNT (829 aa). Ser999 bears the Phosphoserine mark. Residues 1022–1046 form a disordered region; sequence VRLPTTRPTRPPPPLIPSSKTTVAS. Residue Lys1106 forms a Glycyl lysine isopeptide (Lys-Gly) (interchain with G-Cter in SUMO1); alternate linkage. Lys1106 is covalently cross-linked (Glycyl lysine isopeptide (Lys-Gly) (interchain with G-Cter in SUMO2); alternate). Ser1111 is subject to Phosphoserine. Lys1184 participates in a covalent cross-link: Glycyl lysine isopeptide (Lys-Gly) (interchain with G-Cter in SUMO2). Positions 1184 to 1204 are disordered; that stretch reads KGSISRMPIEDSSPEKGREEA. Phosphoserine is present on residues Ser1195, Ser1196, Ser1249, Ser1263, Ser1281, and Ser1322. An N6-acetyllysine modification is found at Lys1336. Thr1367 bears the Phosphothreonine mark. A Glycyl lysine isopeptide (Lys-Gly) (interchain with G-Cter in SUMO2) cross-link involves residue Lys1389. Residue Lys1412 forms a Glycyl lysine isopeptide (Lys-Gly) (interchain with G-Cter in SUMO2); alternate linkage. Lys1412 is subject to N6-acetyllysine; alternate. The tract at residues 1440 to 1459 is disordered; the sequence is AGETVRSRHTSVVSSGPSVL. Residues Ser1450 and Ser1472 each carry the phosphoserine modification. The segment covering 1488–1512 has biased composition (polar residues); the sequence is YQNTMSRGSPMMNRTSDVTISSNKS. Residues 1488–1554 are disordered; sequence YQNTMSRGSP…SPFDPHHRGS (67 aa). Residues 1501 to 2440 form an interaction with C1D region; sequence RTSDVTISSN…QYETLSDSDD (940 aa). Lys1518 participates in a covalent cross-link: Glycyl lysine isopeptide (Lys-Gly) (interchain with G-Cter in SUMO2). Position 1592 is a phosphoserine (Ser1592). 2 disordered regions span residues 1690-1759 and 1884-1922; these read PRPY…SPSP and SSAF…LRTR. 2 stretches are compositionally biased toward basic and acidic residues: residues 1712 to 1729 and 1903 to 1921; these read AERE…RERI and AGKD…ELRT. The short motif at 1933–1937 is the CORNR box 1 element; the sequence is IDVII. The interval 1943 to 1969 is disordered; sequence SDKDARERGSQSSDSSSSLSSHRYETP. The span at 1952–1963 shows a compositional bias: low complexity; sequence SQSSDSSSSLSS. Ser1977 and Ser1981 each carry phosphoserine. The tract at residues 2006-2041 is disordered; sequence PTRQYEGPLHHYRPQQESPSPQQQLPPSSQAEGMGQ. A compositionally biased stretch (low complexity) spans 2020–2035; that stretch reads QQESPSPQQQLPPSSQ. Residues 2032–2115 form an ID1 region; the sequence is PSSQAEGMGQ…QAQSVHHQRP (84 aa). The interval 2047-2050 is required for interaction with RARA in the absence of its ligand; it reads RLIT. A CORNR box 2 motif is present at residues 2055 to 2059; it reads ICQII. The segment covering 2067 to 2086 has biased composition (low complexity); that stretch reads QVSSQTPQQPPTSTFQNSPS. The interval 2067–2155 is disordered; that stretch reads QVSSQTPQQP…PYEPISPPQV (89 aa). The segment covering 2087-2110 has biased composition (polar residues); the sequence is ALVSTPVRTKTSNRYSPESQAQSV. Phosphoserine occurs at positions 2102, 2120, 2136, 2151, and 2184. The span at 2124 to 2142 shows a compositional bias: basic and acidic residues; it reads LVDKSRGSRPGKSPERSHV. Residues 2212–2273 are ID2; sequence IFRKLNSSGG…EDIIRKALMG (62 aa). Positions 2263 to 2267 match the CORNR box 3 motif; that stretch reads LEDII. The interval 2287–2440 is disordered; sequence SQPMGVVPGT…QYETLSDSDD (154 aa). The span at 2296 to 2305 shows a compositional bias: polar residues; the sequence is TANTSVVTSG. Thr2399 carries the phosphothreonine modification. Polar residues-rich tracts occupy residues 2407-2418 and 2431-2440; these read AVNQAAPHQQNR and QYETLSDSDD. Residues Ser2436 and Ser2438 each carry the phosphoserine modification.

This sequence belongs to the N-CoR nuclear receptor corepressors family. As to quaternary structure, forms a large corepressor complex that contains SIN3A/B and histone deacetylases HDAC1 and HDAC2. This complex associates with the thyroid receptor (TR) and the retinoid acid receptor (RAR) in the absence of ligand. Interacts directly with RARA; the interaction is facilitated with RARA trimethylation. Component of the N-Cor repressor complex, at least composed of CBFA2T3, HEXIM1, NCOR1, NCOR2, HDAC3, TBL1X, TBL1XR1, CORO2A and GPS2. Interacts with ZBTB33; the interaction serves to recruit the N-CoR complex to promoter regions containing methylated CpG dinucleotides. Interacts with TRIM28 and KDM3A. Interacts (via the RD1 domain) with BAZ1A (via its N-terminal); the interaction corepresses a number of NCOR1-regulated genes. Interacts with BCL6, C1D, DACH1, HEXIM1, HDAC7, RORA, RORC, SAP30, SIAH2, SIN3A and SIN3B. May interact with DEAF1. Interacts with RXRA. Interacts with SETD5. Interacts with VDR. Interacts with ZBTB7A. Interacts with AR. Interacts with HDAC3. In terms of processing, ubiquitinated; mediated by SIAH2 and leading to its subsequent proteasomal degradation.

The protein localises to the nucleus. Mediates transcriptional repression by certain nuclear receptors. Part of a complex which promotes histone deacetylation and the formation of repressive chromatin structures which may impede the access of basal transcription factors. Participates in the transcriptional repressor activity produced by BCL6. Recruited by ZBTB7A to the androgen response elements/ARE on target genes, negatively regulates androgen receptor signaling and androgen-induced cell proliferation. Mediates the NR1D1-dependent repression and circadian regulation of TSHB expression. The NCOR1-HDAC3 complex regulates the circadian expression of the core clock gene ARTNL/BMAL1 and the genes involved in lipid metabolism in the liver. The chain is Nuclear receptor corepressor 1 (NCOR1) from Homo sapiens (Human).